The sequence spans 118 residues: Sporulation protein YjcA (118 aa).

3 helical membrane passes run 8–28 (IVLL…DTIM), 62–82 (FIGE…GFLI), and 92–112 (AQWL…ETLV).

This sequence belongs to the UPF0713 family.

Its subcellular location is the cell membrane. In terms of biological role, involved in sporulation. In Bacillus subtilis (strain 168), this protein is Sporulation protein YjcA (yjcA).